The chain runs to 261 residues: MAEGKEATTSSLSQGLTPHQDPDDAPKSPPNSPNSSTRKACYGVLQSWVSKKFMTGFVVLFPVAVTFLITWWFIQFVDGFFSPIYENLGVDIFGLGFITSVLFTFFVGIFASSWLGSTVFWLGEQFIRRMPFVKHIYSASKQISTAISPDQNTTAFKEVAIIRHPRIGEYAFGFITSSVTLQTDHGEEELCSVYVPTNHLYIGDVFLVSSEEIIRPNLSIREGIEIIVSVGMTMPQVISHVDRTTNRTPHQHSLRVPLNRL.

The segment at 1 to 38 (MAEGKEATTSSLSQGLTPHQDPDDAPKSPPNSPNSSTR) is disordered. The Cytoplasmic segment spans residues 1–56 (MAEGKEATTSSLSQGLTPHQDPDDAPKSPPNSPNSSTRKACYGVLQSWVSKKFMTG). Residues 7–17 (ATTSSLSQGLT) show a composition bias toward polar residues. A helical transmembrane segment spans residues 57–77 (FVVLFPVAVTFLITWWFIQFV). Residues 78–91 (DGFFSPIYENLGVD) are Extracellular-facing. Residues 92-112 (IFGLGFITSVLFTFFVGIFAS) form a helical membrane-spanning segment. Topologically, residues 113-261 (SWLGSTVFWL…HSLRVPLNRL (149 aa)) are cytoplasmic.

This sequence belongs to the plant COV1 protein family.

Its subcellular location is the membrane. In Arabidopsis thaliana (Mouse-ear cress), this protein is Protein LIKE COV 2.